The following is a 314-amino-acid chain: Olfactory receptor 5I1 (314 aa).

At 1 to 27 (MEFTDRNYTLVTEFILLGFPTRPELQI) the chain is on the extracellular side. An N-linked (GlcNAc...) asparagine glycan is attached at N7. The chain crosses the membrane as a helical span at residues 28–48 (VLFLMFLTLYAIILIGNIGLM). Over 49-56 (LLIRIDPH) the chain is Cytoplasmic. The helical transmembrane segment at 57–77 (LQTPMYFFLSNLSFVDLCYFS) threads the bilayer. The Extracellular portion of the chain corresponds to 78 to 101 (DIVPKMLVNFLSENKSISYYGCAL). A disulfide bond links C99 and C191. The helical transmembrane segment at 102 to 122 (QFYFFCTFADTESFILAAMAY) threads the bilayer. Residues 123–141 (DRYVAICNPLLYTVVMSRG) lie on the Cytoplasmic side of the membrane. A helical membrane pass occupies residues 142–162 (ICMRLIVLSYLGGNMSSLVHT). The Extracellular portion of the chain corresponds to 163–198 (SFAFILKYCDKNVINHFFCDLPPLLKLSCTDTTINE). The helical transmembrane segment at 199-219 (WLLSTYGSSVEIICFIIIIIS) threads the bilayer. Residues 220 to 239 (YFFILLSVLKIRSFSGRKKT) lie on the Cytoplasmic side of the membrane. Residues 240–260 (FSTCASHLTSVTIYQGTLLFI) traverse the membrane as a helical segment. Residues 261-273 (YSRPSYLYSPNTD) lie on the Extracellular side of the membrane. A helical transmembrane segment spans residues 274-294 (KIISVFYTIFIPVLNPLIYSL). At 295-314 (RNKDVKDAAEKVLRSKVDSS) the chain is on the cytoplasmic side.

This sequence belongs to the G-protein coupled receptor 1 family.

The protein localises to the cell membrane. Odorant receptor. In Homo sapiens (Human), this protein is Olfactory receptor 5I1 (OR5I1).